Here is a 119-residue protein sequence, read N- to C-terminus: Large ribosomal subunit protein bL12 (119 aa).

The protein belongs to the bacterial ribosomal protein bL12 family. As to quaternary structure, homodimer. Part of the ribosomal stalk of the 50S ribosomal subunit. Forms a multimeric L10(L12)X complex, where L10 forms an elongated spine to which 2 to 4 L12 dimers bind in a sequential fashion. Binds GTP-bound translation factors.

Functionally, forms part of the ribosomal stalk which helps the ribosome interact with GTP-bound translation factors. Is thus essential for accurate translation. This is Large ribosomal subunit protein bL12 from Bacillus cytotoxicus (strain DSM 22905 / CIP 110041 / 391-98 / NVH 391-98).